A 481-amino-acid polypeptide reads, in one-letter code: UDP-N-acetylmuramoyl-L-alanyl-D-glutamate--L-lysine ligase (481 aa).

Ser-42 is a UDP-N-acetyl-alpha-D-muramoyl-L-alanyl-D-glutamate binding site. 118–124 (GTKGKTT) contributes to the ATP binding site. UDP-N-acetyl-alpha-D-muramoyl-L-alanyl-D-glutamate contacts are provided by residues Gln-158, 160–161 (TT), Ser-187, and Arg-195. Lys-229 bears the N6-carboxylysine mark. The L-lysine recognition motif motif lies at 404–407 (DDPN).

The protein belongs to the MurCDEF family. MurE subfamily. Post-translationally, carboxylation is probably crucial for Mg(2+) binding and, consequently, for the gamma-phosphate positioning of ATP.

Its subcellular location is the cytoplasm. The catalysed reaction is UDP-N-acetyl-alpha-D-muramoyl-L-alanyl-D-glutamate + L-lysine + ATP = UDP-N-acetyl-alpha-D-muramoyl-L-alanyl-gamma-D-glutamyl-L-lysine + ADP + phosphate + H(+). It participates in cell wall biogenesis; peptidoglycan biosynthesis. Catalyzes the addition of L-lysine to the nucleotide precursor UDP-N-acetylmuramoyl-L-alanyl-D-glutamate (UMAG) in the biosynthesis of bacterial cell-wall peptidoglycan. The protein is UDP-N-acetylmuramoyl-L-alanyl-D-glutamate--L-lysine ligase of Streptococcus pyogenes serotype M3 (strain SSI-1).